A 366-amino-acid polypeptide reads, in one-letter code: MSGNTLGTLFTVTTFGESHGPAIGCVIDGCPPGMGLTEADIQFELDRRKPGTSRHVTQRQEADEVEILSGVFEGVTTGTPIALLIRNTDQRSKDYGNIVETFRPGHADYTYWQKYGIRDYRGGGRSSARLTAPIVGAGAVAKKWLRERFGVEVRGYMSCLGEVDVPFVDWSHVRENPFFSPNAAIVPELEAYMDALRKDGDSIGARIDVVASGVPVGWGEPVFDRLDADIAKAMMSINAVKGVEIGAGFDSVAQRGSVHGDELTPAGFVGNHAGGVLGGISTGQDITVSIAIKPTSSIRTPRRSITKAGEEATVETFGRHDPCVGIRATPIAESMLALVLIDHALRHRAQCGDVETSTPKIAGSAT.

Positions 48 and 54 each coordinate NADP(+). FMN contacts are provided by residues 125 to 127 (RSS), 238 to 239 (NA), G278, 293 to 297 (KPTSS), and R319.

This sequence belongs to the chorismate synthase family. In terms of assembly, homotetramer. Requires FMNH2 as cofactor.

It carries out the reaction 5-O-(1-carboxyvinyl)-3-phosphoshikimate = chorismate + phosphate. It functions in the pathway metabolic intermediate biosynthesis; chorismate biosynthesis; chorismate from D-erythrose 4-phosphate and phosphoenolpyruvate: step 7/7. Functionally, catalyzes the anti-1,4-elimination of the C-3 phosphate and the C-6 proR hydrogen from 5-enolpyruvylshikimate-3-phosphate (EPSP) to yield chorismate, which is the branch point compound that serves as the starting substrate for the three terminal pathways of aromatic amino acid biosynthesis. This reaction introduces a second double bond into the aromatic ring system. The chain is Chorismate synthase from Burkholderia ambifaria (strain ATCC BAA-244 / DSM 16087 / CCUG 44356 / LMG 19182 / AMMD) (Burkholderia cepacia (strain AMMD)).